The chain runs to 133 residues: Small ribosomal subunit protein uS8 (133 aa).

Residues Met1–Pro28 are disordered. A compositionally biased stretch (basic and acidic residues) spans Asn16 to Lys26.

The protein belongs to the universal ribosomal protein uS8 family. As to quaternary structure, part of the 30S ribosomal subunit. Contacts proteins S5 and S12.

Its function is as follows. One of the primary rRNA binding proteins, it binds directly to 16S rRNA central domain where it helps coordinate assembly of the platform of the 30S subunit. In Prochlorococcus marinus (strain NATL1A), this protein is Small ribosomal subunit protein uS8.